Reading from the N-terminus, the 412-residue chain is MEKQKLSVKNSITDYIEWLAQYGASADGGVTRLLYTKEWMDAQLAVKTEMSSFGLETRFDDVGNVFGRLSGTQSPDEVIVTGSHIDTVINGGKYDGAYGVLAAMLALKQLKETYGAPKKTLEAVSLCEEEGSRFPMTYWGSGNMTGVFSEQDAKEPRDESGVSLQTAMHESGFGKGVFQSAYRTDISAFVELHIEQGKTLEMSGRDLGIVTSIAGQRRYLVTLEGECNHAGTTSMKWRKDPLAASSRIIHELLLRSDELPDELRLTCGKITAEPNVANVIPGRVQFSIDIRHQHQHVLEQFHQDMVALINGICLQKGIRAVIDEYMRIEPVPMDERLKAAAFETALENGFSCEEMVSGAGHDAQMIGRRYPACMLFVPSRGGVSHSPKEYTSARQLEIGVRALTDLLYKLAY.

Residues His84, Asp95, Glu130, and His193 each contribute to the Zn(2+) site. Allantoate is bound by residues Arg218, Asn278, and Arg291. His385 serves as a coordination point for Zn(2+).

The protein belongs to the peptidase M20 family. In terms of assembly, homodimer. The cofactor is Zn(2+).

Its subcellular location is the cytoplasm. The enzyme catalyses allantoate + H2O + 2 H(+) = (S)-2-ureidoglycine + NH4(+) + CO2. Its pathway is nitrogen metabolism; (S)-allantoin degradation. In terms of biological role, involved in the anaerobic nitrogen utilization via the assimilation of allantoin. Catalyzes specifically the hydrolysis of allantoate to yield CO2, NH3 and S-ureidoglycine, which is unstable and readily undergoes a second deamination by S-ureidoglycine aminohydrolase AllE to yield S-ureidoglycolate and NH3. In Bacillus subtilis (strain 168), this protein is Allantoate amidohydrolase.